We begin with the raw amino-acid sequence, 244 residues long: Biosynthetic peptidoglycan transglycosylase (244 aa).

Residues 25 to 45 form a helical membrane-spanning segment; that stretch reads LLLLLTAALLYQSWFLLHIVY.

It belongs to the glycosyltransferase 51 family.

The protein localises to the cell inner membrane. The enzyme catalyses [GlcNAc-(1-&gt;4)-Mur2Ac(oyl-L-Ala-gamma-D-Glu-L-Lys-D-Ala-D-Ala)](n)-di-trans,octa-cis-undecaprenyl diphosphate + beta-D-GlcNAc-(1-&gt;4)-Mur2Ac(oyl-L-Ala-gamma-D-Glu-L-Lys-D-Ala-D-Ala)-di-trans,octa-cis-undecaprenyl diphosphate = [GlcNAc-(1-&gt;4)-Mur2Ac(oyl-L-Ala-gamma-D-Glu-L-Lys-D-Ala-D-Ala)](n+1)-di-trans,octa-cis-undecaprenyl diphosphate + di-trans,octa-cis-undecaprenyl diphosphate + H(+). It functions in the pathway cell wall biogenesis; peptidoglycan biosynthesis. Functionally, peptidoglycan polymerase that catalyzes glycan chain elongation from lipid-linked precursors. The sequence is that of Biosynthetic peptidoglycan transglycosylase from Nitrosomonas europaea (strain ATCC 19718 / CIP 103999 / KCTC 2705 / NBRC 14298).